The primary structure comprises 515 residues: Bifunctional purine biosynthesis protein PurH (515 aa).

Residues 1-145 (MTKRVLISVS…KNHASVTVVV (145 aa)) enclose the MGS-like domain.

This sequence belongs to the PurH family.

The catalysed reaction is (6R)-10-formyltetrahydrofolate + 5-amino-1-(5-phospho-beta-D-ribosyl)imidazole-4-carboxamide = 5-formamido-1-(5-phospho-D-ribosyl)imidazole-4-carboxamide + (6S)-5,6,7,8-tetrahydrofolate. It carries out the reaction IMP + H2O = 5-formamido-1-(5-phospho-D-ribosyl)imidazole-4-carboxamide. It functions in the pathway purine metabolism; IMP biosynthesis via de novo pathway; 5-formamido-1-(5-phospho-D-ribosyl)imidazole-4-carboxamide from 5-amino-1-(5-phospho-D-ribosyl)imidazole-4-carboxamide (10-formyl THF route): step 1/1. It participates in purine metabolism; IMP biosynthesis via de novo pathway; IMP from 5-formamido-1-(5-phospho-D-ribosyl)imidazole-4-carboxamide: step 1/1. In Streptococcus pneumoniae (strain JJA), this protein is Bifunctional purine biosynthesis protein PurH.